We begin with the raw amino-acid sequence, 77 residues long: Ubiquitin-like protein NEDD8 (77 aa).

Residues 70–72 form an interaction with uba-3 region; sequence VLA. Residue glycine 76 forms a Glycyl lysine isopeptide (Gly-Lys) (interchain with K-? in acceptor proteins) linkage. Phenylalanine 77 is a propeptide.

It belongs to the ubiquitin family. Interacts with dcn-1. Covalently attached to cullins. May interact with atx-3. In terms of processing, cleavage of precursor form is necessary for function.

It is found in the nucleus. Its subcellular location is the cytoplasm. In terms of biological role, ubiquitin-like protein which plays an important role in cell cycle control and embryogenesis. Covalent attachment to its substrates requires prior activation by the E1 complex uba-3-ula-1 and linkage to the E2 enzyme ubc-12. Attachment of ned-8 to cullins activates their associated E3 ubiquitin ligase activity, and thus promotes polyubiquitination and proteasomal degradation of cyclins and other regulatory proteins. In Caenorhabditis elegans, this protein is Ubiquitin-like protein NEDD8 (ned-8).